Reading from the N-terminus, the 400-residue chain is Acetate kinase (400 aa).

A Mg(2+)-binding site is contributed by asparagine 7. Lysine 14 is an ATP binding site. Arginine 91 serves as a coordination point for substrate. Catalysis depends on aspartate 148, which acts as the Proton donor/acceptor. ATP is bound by residues 208–212 (HIGNG), 283–285 (DFR), and 332–336 (GIGEH). Glutamate 387 provides a ligand contact to Mg(2+).

It belongs to the acetokinase family. In terms of assembly, homodimer. Mg(2+) serves as cofactor. Requires Mn(2+) as cofactor.

It localises to the cytoplasm. The enzyme catalyses acetate + ATP = acetyl phosphate + ADP. The protein operates within metabolic intermediate biosynthesis; acetyl-CoA biosynthesis; acetyl-CoA from acetate: step 1/2. In terms of biological role, catalyzes the formation of acetyl phosphate from acetate and ATP. Can also catalyze the reverse reaction. The protein is Acetate kinase of Clostridium beijerinckii (strain ATCC 51743 / NCIMB 8052) (Clostridium acetobutylicum).